Consider the following 224-residue polypeptide: Ribose-5-phosphate isomerase A (224 aa).

Substrate contacts are provided by residues 26–29 (TGST), 81–84 (DGAD), and 94–97 (KGGG). Residue Glu103 is the Proton acceptor of the active site. Residue Lys121 participates in substrate binding.

Belongs to the ribose 5-phosphate isomerase family. As to quaternary structure, homodimer.

It carries out the reaction aldehydo-D-ribose 5-phosphate = D-ribulose 5-phosphate. It functions in the pathway carbohydrate degradation; pentose phosphate pathway; D-ribose 5-phosphate from D-ribulose 5-phosphate (non-oxidative stage): step 1/1. In terms of biological role, catalyzes the reversible conversion of ribose-5-phosphate to ribulose 5-phosphate. The chain is Ribose-5-phosphate isomerase A from Listeria monocytogenes serotype 4b (strain F2365).